We begin with the raw amino-acid sequence, 378 residues long: Ribosomal RNA large subunit methyltransferase G (378 aa).

It belongs to the methyltransferase superfamily. RlmG family.

It localises to the cytoplasm. The enzyme catalyses guanosine(1835) in 23S rRNA + S-adenosyl-L-methionine = N(2)-methylguanosine(1835) in 23S rRNA + S-adenosyl-L-homocysteine + H(+). Functionally, specifically methylates the guanine in position 1835 (m2G1835) of 23S rRNA. The chain is Ribosomal RNA large subunit methyltransferase G from Shigella boydii serotype 18 (strain CDC 3083-94 / BS512).